Here is a 746-residue protein sequence, read N- to C-terminus: Histone-lysine N-methyltransferase EZH2 (746 aa).

The segment at 1 to 340 (MGQTGKKSEK…AKEFAAALTA (340 aa)) is interaction with DNMT1, DNMT3A and DNMT3B. S21 is subject to Phosphoserine; by PKB/AKT1. Positions 39-68 (KSMFSSNRQKILERTEILNQEWKQRRIQPV) are interaction with EED. O-linked (GlcNAc) serine glycosylation is present at S75. Residue S76 is modified to Phosphoserine. The tract at residues 180–222 (QYNDDDDDDDGDDPEEREEKQKDLEDHRDDKESRPPRKFPSDK) is disordered. Over residues 182 to 195 (NDDDDDDDGDDPEE) the composition is skewed to acidic residues. The span at 196-222 (REEKQKDLEDHRDDKESRPPRKFPSDK) shows a compositional bias: basic and acidic residues. The segment at 329–522 (EGAKEFAAAL…SSNHVYNYQP (194 aa)) is interaction with CDYL. The residue at position 339 (T339) is a Phosphothreonine. A disordered region spans residues 340-426 (AERIKTPPKR…PIKMKPNIEP (87 aa)). Phosphothreonine; by CDK1 and CDK2 is present on T345. Residues 345–357 (TPPKRPGGRRRGR) show a composition bias toward basic residues. 2 positions are modified to phosphoserine: S363 and S366. T367 carries the phosphothreonine modification. A compositionally biased stretch (basic and acidic residues) spans 374-385 (ESKDTDSDREAG). A Phosphothreonine modification is found at T487. Residues 503–605 (CRKIQLKKDG…SKNVSCKNCS (103 aa)) form the CXC domain. The 116-residue stretch at 612 to 727 (KHLLLAPSDV…TGEELFFDYR (116 aa)) folds into the SET domain. K634 is covalently cross-linked (Glycyl lysine isopeptide (Lys-Gly) (interchain with G-Cter in SUMO2)).

The protein belongs to the class V-like SAM-binding methyltransferase superfamily. Histone-lysine methyltransferase family. EZ subfamily. Component of the PRC2/EED-EZH2 complex, which includes EED, EZH2, SUZ12, RBBP4 and RBBP7 and possibly AEBP2. The minimum components required for methyltransferase activity of the PRC2/EED-EZH2 complex are EED, EZH2 and SUZ12. The PRC2 complex may also interact with DNMT1, DNMT3A, DNMT3B and PHF1 via the EZH2 subunit and with SIRT1 via the SUZ12 subunit. Interacts with HDAC1 and HDAC2. Binds ATRX via the SET domain. Interacts with PRAME. Interacts with CDYL. Interacts with CLOCK, BMAL1 and CRY1. Interacts with DNMT3L; the interaction is direct. Interacts with EZHIP; the interaction blocks EZH2 methyltransferase activity. Interacts with ZNF263; recruited to the SIX3 promoter along with other proteins involved in chromatin modification and transcriptional corepression where it contributes to transcriptional repression. Interacts with ARMC12. Interacts with ZMYND8; the interaction is dependent on the presence of chromatin. Interacts with DDX18; this interaction inhibits the PRC2 complex. Phosphorylated by AKT1. Phosphorylation by AKT1 reduces methyltransferase activity. Phosphorylation at Thr-345 by CDK1 and CDK2 promotes maintenance of H3K27me3 levels at EZH2-target loci, thus leading to epigenetic gene silencing. In terms of processing, sumoylated. Post-translationally, glycosylated: O-GlcNAcylation at Ser-75 by OGT increases stability of EZH2 and facilitates the formation of H3K27me3 by the PRC2/EED-EZH2 complex. In the ovary, expressed in primordial follicles and oocytes and also in external follicle cells (at protein level). Expressed in many tissues. Overexpressed in numerous tumor types including carcinomas of the breast, colon, larynx, lymphoma and testis.

It localises to the nucleus. It carries out the reaction L-lysyl(27)-[histone H3] + 3 S-adenosyl-L-methionine = N(6),N(6),N(6)-trimethyl-L-lysyl(27)-[histone H3] + 3 S-adenosyl-L-homocysteine + 3 H(+). Its function is as follows. Polycomb group (PcG) protein. Catalytic subunit of the PRC2/EED-EZH2 complex, which methylates 'Lys-9' (H3K9me) and 'Lys-27' (H3K27me) of histone H3, leading to transcriptional repression of the affected target gene. Able to mono-, di- and trimethylate 'Lys-27' of histone H3 to form H3K27me1, H3K27me2 and H3K27me3, respectively. Displays a preference for substrates with less methylation, loses activity when progressively more methyl groups are incorporated into H3K27, H3K27me0 &gt; H3K27me1 &gt; H3K27me2. Compared to EZH1-containing complexes, it is more abundant in embryonic stem cells and plays a major role in forming H3K27me3, which is required for embryonic stem cell identity and proper differentiation. The PRC2/EED-EZH2 complex may also serve as a recruiting platform for DNA methyltransferases, thereby linking two epigenetic repression systems. Genes repressed by the PRC2/EED-EZH2 complex include HOXC8, HOXA9, MYT1, CDKN2A and retinoic acid target genes. EZH2 can also methylate non-histone proteins such as the transcription factor GATA4 and the nuclear receptor RORA. Regulates the circadian clock via histone methylation at the promoter of the circadian genes. Essential for the CRY1/2-mediated repression of the transcriptional activation of PER1/2 by the CLOCK-BMAL1 heterodimer; involved in the di and trimethylation of 'Lys-27' of histone H3 on PER1/2 promoters which is necessary for the CRY1/2 proteins to inhibit transcription. The protein is Histone-lysine N-methyltransferase EZH2 of Homo sapiens (Human).